We begin with the raw amino-acid sequence, 118 residues long: Beta-2-microglobulin (118 aa).

Positions 1-20 are cleaved as a signal peptide; the sequence is MARFVVLVLLGLLYLSHLDA. Residues 25–113 enclose the Ig-like C1-type domain; that stretch reads PKVQVYSRHP…TTLSEPKVVK (89 aa). A disulfide bridge connects residues C45 and C99.

The protein belongs to the beta-2-microglobulin family. As to quaternary structure, heterodimer of an alpha chain and a beta chain. Beta-2-microglobulin is the beta-chain of major histocompatibility complex class I molecules.

The protein localises to the secreted. Component of the class I major histocompatibility complex (MHC). Involved in the presentation of peptide antigens to the immune system. This chain is Beta-2-microglobulin (B2M), found in Felis catus (Cat).